A 997-amino-acid polypeptide reads, in one-letter code: Sarcoplasmic/endoplasmic reticulum calcium ATPase 2 (997 aa).

Over 1-48 the chain is Cytoplasmic; that stretch reads MENAHTKTVEEVLGYFGVNESTGLSLEQVKKLKERWGSNELPAEEGKT. Position 38 is a phosphoserine (serine 38). Residues 49-69 traverse the membrane as a helical segment; the sequence is LLELVIEQFEDLLVRILLLAA. The Lumenal segment spans residues 70 to 89; it reads CISFVLAWFEEGEETITAFV. The chain crosses the membrane as a helical span at residues 90-110; it reads EPFVILLILVANAIVGVWQER. Topologically, residues 111-253 are cytoplasmic; the sequence is NAENAIEALK…QERTPLQQKL (143 aa). A helical membrane pass occupies residues 254 to 273; the sequence is DEFGEQLSKVISLICIAVWI. The Lumenal segment spans residues 274 to 295; sequence INIGHFNDPVHGGSWIRGAIYY. 2 positions are modified to 3'-nitrotyrosine: tyrosine 294 and tyrosine 295. Residues 296-313 traverse the membrane as a helical segment; the sequence is FKIAVALAVAAIPEGLPA. The Ca(2+) site is built by valine 304, alanine 305, isoleucine 307, and glutamate 309. At 314–756 the chain is on the cytoplasmic side; that stretch reads VITTCLALGT…EEGRAIYNNM (443 aa). The active-site 4-aspartylphosphate intermediate is the aspartate 351. Mg(2+)-binding residues include aspartate 351 and threonine 353. An ATP-binding site is contributed by threonine 353. Position 441 is a phosphothreonine (threonine 441). Residues glutamate 442, arginine 489, and lysine 514 each coordinate ATP. Phosphoserine is present on serine 531. ATP is bound at residue arginine 559. Positions 575–594 are interaction with HAX1; sequence MNLEDSANFIKYETNLTFVG. Residue serine 580 is modified to Phosphoserine. 3 residues coordinate ATP: threonine 624, glycine 625, and aspartate 626. 2 positions are modified to phosphoserine: serine 661 and serine 663. Arginine 677 and lysine 683 together coordinate ATP. Residue aspartate 702 coordinates Mg(2+). ATP is bound at residue asparagine 705. The helical transmembrane segment at 757 to 776 threads the bilayer; sequence KQFIRYLISSNVGEVVCIFL. Ca(2+)-binding residues include asparagine 767 and glutamate 770. Over 777–786 the chain is Lumenal; that stretch reads TAALGFPEAL. Residues 787–807 traverse the membrane as a helical segment; that stretch reads IPVQLLWVNLVTDGLPATALG. The tract at residues 787–807 is interaction with PLN; that stretch reads IPVQLLWVNLVTDGLPATALG. An interaction with TMEM64 and PDIA3 region spans residues 788 to 997; that stretch reads PVQLLWVNLV…RNYLEPAILE (210 aa). Positions 795, 798, and 799 each coordinate Ca(2+). Residues 808–827 lie on the Cytoplasmic side of the membrane; the sequence is FNPPDLDIMNKPPRNPKEPL. Residues 828 to 850 traverse the membrane as a helical segment; it reads ISGWLFFRYLAIGCYVGAATVGA. Topologically, residues 851–896 are lumenal; the sequence is AAWWFIAADGGPRVSFYQLSHFLQCKDDNPDFEGVDCAIFESPYPM. Cysteine 875 and cysteine 887 are oxidised to a cystine. Residues 897–916 traverse the membrane as a helical segment; it reads TMALSVLVTIEMCNALNSLS. A Ca(2+)-binding site is contributed by glutamate 907. The Cytoplasmic portion of the chain corresponds to 917 to 929; sequence ENQSLLRMPPWEN. Residues 930–948 form a helical membrane-spanning segment; the sequence is IWLVGSICLSMSLHFLILY. The interaction with PLN stretch occupies residues 931–942; it reads WLVGSICLSMSL. The Lumenal portion of the chain corresponds to 949–963; that stretch reads VEPLPLIFQITPLNL. Residues 964 to 984 form a helical membrane-spanning segment; that stretch reads TQWLMVLKISLPVILMDETLK. Over 985 to 997 the chain is Cytoplasmic; it reads FVARNYLEPAILE.

The protein belongs to the cation transport ATPase (P-type) (TC 3.A.3) family. Type IIA subfamily. In terms of assembly, interacts with sarcolipin (SLN); the interaction inhibits ATP2A2 Ca(2+) affinity. Interacts with phospholamban (PLN); the interaction inhibits ATP2A2 Ca(2+) affinity. Interacts with myoregulin (MRLN). Interacts with ARLN and ERLN; the interactions inhibit ATP2A2 Ca(2+) affinity. Interacts with STRIT1/DWORF; the interaction results in activation of ATP2A2. Interacts with the monomeric forms of SLN, PLN, ARLN, ERLN and STRI1/DWORF. Interacts with HAX1. Interacts with S100A8 and S100A9. Interacts with SLC35G1 and STIM1. Interacts with TMEM203. Interacts with TMEM64 and PDIA3. Interacts with TMX1. Interacts with TMX2. Interacts with VMP1; VMP1 competes with PLN and SLN to prevent them from forming an inhibitory complex with ATP2A2. Interacts with ULK1. Interacts with S100A1 in a Ca(2+)-dependent manner. Interacts with TUNAR. Interacts with FLVCR2; this interaction occurs in the absence of heme and promotes ATP2A2 proteasomal degradation; this complex is dissociated upon heme binding. Interacts with FNIP1. As to quaternary structure, interacts with TRAM2 (via C-terminus). Mg(2+) serves as cofactor. In terms of processing, nitrated under oxidative stress. Nitration on the two tyrosine residues inhibits catalytic activity. Serotonylated on Gln residues by TGM2 in response to hypoxia, leading to its inactivation. In terms of tissue distribution, isoform 1 is expressed in the heart.

The protein resides in the endoplasmic reticulum membrane. Its subcellular location is the sarcoplasmic reticulum membrane. The enzyme catalyses Ca(2+)(in) + ATP + H2O = Ca(2+)(out) + ADP + phosphate + H(+). Its activity is regulated as follows. Has different conformational states with differential Ca2+ affinity. The E1 conformational state (active form) shows high Ca(2+) affinity, while the E2 state exhibits low Ca(2+) affinity. Binding of ATP allosterically increases its affinity for subsequent binding of Ca2+. Reversibly inhibited by phospholamban (PLN) at low calcium concentrations. PLN inhibits ATP2A2 Ca(2+) affinity by disrupting its allosteric activation by ATP. Inhibited by sarcolipin (SLN) and myoregulin (MRLN). The inhibition is blocked by VMP1. Enhanced by STRIT1/DWORF; STRIT1 increases activity by displacing sarcolipin (SLN), phospholamban (PLN) and myoregulin (MRLN). Stabilizes SERCA2 in its E2 state. Functionally, this magnesium-dependent enzyme catalyzes the hydrolysis of ATP coupled with the translocation of calcium from the cytosol to the sarcoplasmic reticulum lumen. Involved in autophagy in response to starvation. Upon interaction with VMP1 and activation, controls ER-isolation membrane contacts for autophagosome formation. Also modulates ER contacts with lipid droplets, mitochondria and endosomes. In coordination with FLVCR2 mediates heme-stimulated switching from mitochondrial ATP synthesis to thermogenesis. Involved in the regulation of the contraction/relaxation cycle. Acts as a regulator of TNFSF11-mediated Ca(2+) signaling pathways via its interaction with TMEM64 which is critical for the TNFSF11-induced CREB1 activation and mitochondrial ROS generation necessary for proper osteoclast generation. Association between TMEM64 and SERCA2 in the ER leads to cytosolic Ca(2+) spiking for activation of NFATC1 and production of mitochondrial ROS, thereby triggering Ca(2+) signaling cascades that promote osteoclast differentiation and activation. The sequence is that of Sarcoplasmic/endoplasmic reticulum calcium ATPase 2 (ATP2A2) from Felis catus (Cat).